A 347-amino-acid polypeptide reads, in one-letter code: NADH-ubiquinone oxidoreductase chain 2 (347 aa).

Transmembrane regions (helical) follow at residues 1-21, 25-45, 67-87, 111-131, 144-164, 178-198, 201-221, 237-257, 274-294, and 326-346; these read MNPL…LIVM, HWFM…PLLT, SMLL…WSIM, FHFW…LILL, MIMP…SIAI, IMAY…AYNP, TLLN…LLMI, LPLI…LPPL, SSII…YFYT, and LPLM…MPIL.

This sequence belongs to the complex I subunit 2 family. As to quaternary structure, core subunit of respiratory chain NADH dehydrogenase (Complex I) which is composed of 45 different subunits. Interacts with TMEM242.

It is found in the mitochondrion inner membrane. The enzyme catalyses a ubiquinone + NADH + 5 H(+)(in) = a ubiquinol + NAD(+) + 4 H(+)(out). Functionally, core subunit of the mitochondrial membrane respiratory chain NADH dehydrogenase (Complex I) which catalyzes electron transfer from NADH through the respiratory chain, using ubiquinone as an electron acceptor. Essential for the catalytic activity and assembly of complex I. The chain is NADH-ubiquinone oxidoreductase chain 2 from Myotis simus (Velvety myotis).